A 390-amino-acid polypeptide reads, in one-letter code: Pre-mycofactocin synthase (390 aa).

Residues 1 to 383 (MADEWFETVA…RSDDILIPAD (383 aa)) enclose the FMN hydroxy acid dehydrogenase domain. Residues Ser108, Gln128, Thr156, and Lys254 each coordinate FMN. His278 (proton acceptor) is an active-site residue. Residues 309–313 (DGGIR) and 332–333 (GR) each bind FMN.

It belongs to the FMN-dependent alpha-hydroxy acid dehydrogenase family. The cofactor is FMN.

It carries out the reaction 3-amino-5-[(4-hydroxyphenyl)methyl]-4,4-dimethyl-2-pyrrolidin-2-one + O2 + H2O = pre-mycofactocin + H2O2 + NH4(+). Involved in the biosynthesis of the enzyme cofactor mycofactocin (MFT). Catalyzes the oxidative deamination of AHDP (3-amino-5-[(4-hydroxyphenyl)methyl]-4,4-dimethyl-2-pyrrolidin-2-one), forming an alpha-keto amide moiety on the resulting molecule, which is called pre-mycofactocin (PMFT). This reaction occurs via a 5-[(4-hydroxyphenyl)methyl]-3-imino-4,4-dimethylpyrrolidin-2-one intermediate, which converts to PMFT. The alpha-keto amide moiety is the redox-active center for the redox activity of mycofactocin. The protein is Pre-mycofactocin synthase of Mycobacterium ulcerans (strain Agy99).